A 375-amino-acid polypeptide reads, in one-letter code: Queuine tRNA-ribosyltransferase (375 aa).

Catalysis depends on D90, which acts as the Proton acceptor. Residues 90–94 (DSGGF), D144, Q190, and G217 contribute to the substrate site. An RNA binding region spans residues 248–254 (GIGTPHY). Catalysis depends on D267, which acts as the Nucleophile. Positions 272-276 (TRIAR) are RNA binding; important for wobble base 34 recognition. Zn(2+)-binding residues include C305, C307, C310, and H336.

Belongs to the queuine tRNA-ribosyltransferase family. As to quaternary structure, homodimer. Within each dimer, one monomer is responsible for RNA recognition and catalysis, while the other monomer binds to the replacement base PreQ1. It depends on Zn(2+) as a cofactor.

The enzyme catalyses 7-aminomethyl-7-carbaguanine + guanosine(34) in tRNA = 7-aminomethyl-7-carbaguanosine(34) in tRNA + guanine. It functions in the pathway tRNA modification; tRNA-queuosine biosynthesis. Catalyzes the base-exchange of a guanine (G) residue with the queuine precursor 7-aminomethyl-7-deazaguanine (PreQ1) at position 34 (anticodon wobble position) in tRNAs with GU(N) anticodons (tRNA-Asp, -Asn, -His and -Tyr). Catalysis occurs through a double-displacement mechanism. The nucleophile active site attacks the C1' of nucleotide 34 to detach the guanine base from the RNA, forming a covalent enzyme-RNA intermediate. The proton acceptor active site deprotonates the incoming PreQ1, allowing a nucleophilic attack on the C1' of the ribose to form the product. After dissociation, two additional enzymatic reactions on the tRNA convert PreQ1 to queuine (Q), resulting in the hypermodified nucleoside queuosine (7-(((4,5-cis-dihydroxy-2-cyclopenten-1-yl)amino)methyl)-7-deazaguanosine). The polypeptide is Queuine tRNA-ribosyltransferase (Borrelia recurrentis (strain A1)).